The chain runs to 846 residues: MAEITVGQLAQQTNKEVDALLKQLKSFGIEKSSEKDTLTPTEMKTLLEKINSAKNTATRKKVTSVKLDGKHKINVSVKRKRRVAKKMEQQESTTLEQPQELETMVQEVSQQVDIVKEQDNIEQIVENKEAVKVQEQRQAEIAKPVIKDSGFKITAMPEIKIEEIVAEDDEGLAASDKQAKKKAAKKVFSEAVNTNTKYKCEEEEKKSKAKKAGGKGFKKANPRQLSQLAGDLESFDEFGAKKGKLKAPKVKKQEFTKPVENTVRTVEIHEGITVSELAQKMAVKGAEIVKVLFNMGVMATINQSLDQDTAILIVEEMGHKYTLHNENALEEAVTIVDRSSYKKISRAPVVTIMGHVDHGKTSLLDYIRQTRVVAGEAGGITQHIGAYSVKTDKGSITFLDTPGHEAFTSMRARGAKSTDIVILVVAADDGVMPQTEEAIQHAKAARVPIVVAVNKIDKPEADSDKVISELAQRNVIPESWGGDVMFVNVSAKTGEGVADLLEAVLLQSEVLELEAFAEGLAEGVVIESRLEKGRGPVATVLVQNGNLKQGDNILCGTEYGRVRAMHNDLGKKIKAAGPATPVEILGLSGVPAAGDEMVVIENEKKAKELAAQRSQKQKEAKIAQEQSLKLSNMFNNMGKEGEQQVLKIILKGDVQGSVEAIRESLLKLSTDEVKVDIIASGIGAITSSDVTLAVASTAVVIGFNVRADSAAKKLAETDGVEFRYYNIIYDLIDDVKKAMSGLLSPEMKEQIIGIAEVREVYRSSKFGSIAGCMVIEGVVKRTNPIRVLRNNVVIYEGTLESLKRFKDDASEVKKGLECGIGVKNYNDVREGDQIEVFEVIEVAKEL.

A tr-type G domain is found at 345-512 (SRAPVVTIMG…AVLLQSEVLE (168 aa)). Residues 354–361 (GHVDHGKT) are G1. 354–361 (GHVDHGKT) is a GTP binding site. The G2 stretch occupies residues 379–383 (GITQH). Residues 400–403 (DTPG) are G3. Residues 400–404 (DTPGH) and 454–457 (NKID) each bind GTP. The segment at 454 to 457 (NKID) is G4. The tract at residues 490-492 (SAK) is G5.

It belongs to the TRAFAC class translation factor GTPase superfamily. Classic translation factor GTPase family. IF-2 subfamily.

The protein localises to the cytoplasm. One of the essential components for the initiation of protein synthesis. Protects formylmethionyl-tRNA from spontaneous hydrolysis and promotes its binding to the 30S ribosomal subunits. Also involved in the hydrolysis of GTP during the formation of the 70S ribosomal complex. This Francisella tularensis subsp. holarctica (strain FTNF002-00 / FTA) protein is Translation initiation factor IF-2.